The sequence spans 1181 residues: WD repeat-containing protein 35 (1181 aa).

WD repeat units lie at residues P12–K51, G69–E108, R113–K152, L154–M193, and G502–K539.

Component of the IFT complex A (IFT-A) complex. IFT-A complex is divided into a core subcomplex composed of IFT122:IFT140:WDR19 which is associated with TULP3 and a peripheral subcomplex composed of IFT43:WDR35:TTC21B. Interacts directy with IFT122, ITF43 and TTC21B. Interacts with IFT43. Interacts with CFAP61.

Its subcellular location is the cytoplasm. It localises to the cytoskeleton. The protein localises to the microtubule organizing center. The protein resides in the centrosome. It is found in the cilium axoneme. Its subcellular location is the cilium basal body. Functionally, as a component of the IFT complex A (IFT-A), a complex required for retrograde ciliary transport and entry into cilia of G protein-coupled receptors (GPCRs), it is involved in ciliogenesis and ciliary protein trafficking. May promote CASP3 activation and TNF-stimulated apoptosis. In Mus musculus (Mouse), this protein is WD repeat-containing protein 35.